The sequence spans 264 residues: S-adenosylmethionine decarboxylase proenzyme (264 aa).

Catalysis depends on serine 113, which acts as the Schiff-base intermediate with substrate; via pyruvic acid. Serine 113 is subject to Pyruvic acid (Ser); by autocatalysis. Histidine 118 serves as the catalytic Proton acceptor; for processing activity. Cysteine 141 serves as the catalytic Proton donor; for catalytic activity.

The protein belongs to the prokaryotic AdoMetDC family. Type 2 subfamily. As to quaternary structure, heterooctamer of four alpha and four beta chains arranged as a tetramer of alpha/beta heterodimers. Pyruvate is required as a cofactor. Is synthesized initially as an inactive proenzyme. Formation of the active enzyme involves a self-maturation process in which the active site pyruvoyl group is generated from an internal serine residue via an autocatalytic post-translational modification. Two non-identical subunits are generated from the proenzyme in this reaction, and the pyruvate is formed at the N-terminus of the alpha chain, which is derived from the carboxyl end of the proenzyme. The post-translation cleavage follows an unusual pathway, termed non-hydrolytic serinolysis, in which the side chain hydroxyl group of the serine supplies its oxygen atom to form the C-terminus of the beta chain, while the remainder of the serine residue undergoes an oxidative deamination to produce ammonia and the pyruvoyl group blocking the N-terminus of the alpha chain.

It carries out the reaction S-adenosyl-L-methionine + H(+) = S-adenosyl 3-(methylsulfanyl)propylamine + CO2. It functions in the pathway amine and polyamine biosynthesis; S-adenosylmethioninamine biosynthesis; S-adenosylmethioninamine from S-adenosyl-L-methionine: step 1/1. Functionally, catalyzes the decarboxylation of S-adenosylmethionine to S-adenosylmethioninamine (dcAdoMet), the propylamine donor required for the synthesis of the polyamines spermine and spermidine from the diamine putrescine. The polypeptide is S-adenosylmethionine decarboxylase proenzyme (Pseudomonas aeruginosa (strain ATCC 15692 / DSM 22644 / CIP 104116 / JCM 14847 / LMG 12228 / 1C / PRS 101 / PAO1)).